Here is a 269-residue protein sequence, read N- to C-terminus: uncharacterized protein (269 aa).

Positions 1–21 are disordered; it reads MAYSSSNSDIEDDSSKSNSNL.

This is an uncharacterized protein from Homo sapiens (Human).